Consider the following 226-residue polypeptide: Small ribosomal subunit protein uS3 (226 aa).

The KH type-2 domain maps to 39 to 107 (IRAYIKKNVV…EVTLNIKEVK (69 aa)).

It belongs to the universal ribosomal protein uS3 family. Part of the 30S ribosomal subunit. Forms a tight complex with proteins S10 and S14.

Binds the lower part of the 30S subunit head. Binds mRNA in the 70S ribosome, positioning it for translation. This chain is Small ribosomal subunit protein uS3, found in Pelagibacter ubique (strain HTCC1062).